A 502-amino-acid polypeptide reads, in one-letter code: Probable cytosol aminopeptidase (502 aa).

K269 and D274 together coordinate Mn(2+). The active site involves K281. 3 residues coordinate Mn(2+): D292, D351, and E353. The active site involves R355.

The protein belongs to the peptidase M17 family. It depends on Mn(2+) as a cofactor.

It is found in the cytoplasm. The catalysed reaction is Release of an N-terminal amino acid, Xaa-|-Yaa-, in which Xaa is preferably Leu, but may be other amino acids including Pro although not Arg or Lys, and Yaa may be Pro. Amino acid amides and methyl esters are also readily hydrolyzed, but rates on arylamides are exceedingly low.. The enzyme catalyses Release of an N-terminal amino acid, preferentially leucine, but not glutamic or aspartic acids.. Presumably involved in the processing and regular turnover of intracellular proteins. Catalyzes the removal of unsubstituted N-terminal amino acids from various peptides. In Shewanella frigidimarina (strain NCIMB 400), this protein is Probable cytosol aminopeptidase.